The chain runs to 246 residues: uncharacterized protein (246 aa).

6 consecutive transmembrane segments (helical) span residues 7 to 27 (KVTLVSLILMAVFQFFMALII), 50 to 70 (LNILLQALTIVIAATIVSMEF), 99 to 119 (VSFYLYLAYYILALLFGLLFF), 135 to 155 (LALIGSNWLEAVMMGLFGLLC), 163 to 183 (AVAVVVSFVVLYGASTLVQLM), and 219 to 239 (FSIGILIIHAIFFIVVGWWCF).

It is found in the cell membrane. This is an uncharacterized protein from Bacillus subtilis (strain 168).